The sequence spans 330 residues: Putative protein DDB_G0285185 (330 aa).

The segment at 212–240 is disordered; the sequence is NKLQNQVQSSPKLSSPITKNKEQIVSTTS. The segment covering 214–240 has biased composition (polar residues); it reads LQNQVQSSPKLSSPITKNKEQIVSTTS.

The chain is Putative protein DDB_G0285185 from Dictyostelium discoideum (Social amoeba).